A 93-amino-acid polypeptide reads, in one-letter code: MFKVNEYFDGTVKSIAFSQAEGQATIGVMAAGEYEFGTAQREIMHVISGELNVKLPDSTDWETFSTGSQFNVPANSKFQLKVSVDTAYLCEYR.

The protein belongs to the nucleoside phosphorylase PpnP family.

It catalyses the reaction a purine D-ribonucleoside + phosphate = a purine nucleobase + alpha-D-ribose 1-phosphate. The catalysed reaction is adenosine + phosphate = alpha-D-ribose 1-phosphate + adenine. The enzyme catalyses cytidine + phosphate = cytosine + alpha-D-ribose 1-phosphate. It carries out the reaction guanosine + phosphate = alpha-D-ribose 1-phosphate + guanine. It catalyses the reaction inosine + phosphate = alpha-D-ribose 1-phosphate + hypoxanthine. The catalysed reaction is thymidine + phosphate = 2-deoxy-alpha-D-ribose 1-phosphate + thymine. The enzyme catalyses uridine + phosphate = alpha-D-ribose 1-phosphate + uracil. It carries out the reaction xanthosine + phosphate = alpha-D-ribose 1-phosphate + xanthine. Catalyzes the phosphorolysis of diverse nucleosides, yielding D-ribose 1-phosphate and the respective free bases. Can use uridine, adenosine, guanosine, cytidine, thymidine, inosine and xanthosine as substrates. Also catalyzes the reverse reactions. This is Pyrimidine/purine nucleoside phosphorylase from Pseudomonas syringae pv. tomato (strain ATCC BAA-871 / DC3000).